A 143-amino-acid polypeptide reads, in one-letter code: Sporulation-specific cell division protein SsgB (143 aa).

This sequence belongs to the SsgA family. In terms of assembly, interacts with SsgA. Interacts with FtsZ (via N-terminus).

It is found in the cell septum. Functionally, involved in sporulation-specific cell division. Required for early stages of sporulation. Important in the process of growth cessation prior to sporulation-specific cell division. Recruits cell division protein FtsZ to the future septum sites and tethers the contractile ring structure (Z ring) to the cytoplasmic membrane during sporulation. Stimulates polymerization and filament length of FtsZ in vitro. This chain is Sporulation-specific cell division protein SsgB, found in Salinispora tropica (strain ATCC BAA-916 / DSM 44818 / JCM 13857 / NBRC 105044 / CNB-440).